The primary structure comprises 554 residues: Urocanate hydratase (554 aa).

Residues 49–50 (GG), Q127, 173–175 (GMG), E193, R198, 239–240 (NA), 260–264 (QTSAH), 270–271 (YI), and Y319 each bind NAD(+). The active site involves C407. G489 is a binding site for NAD(+).

The protein belongs to the urocanase family. Requires NAD(+) as cofactor.

It is found in the cytoplasm. It catalyses the reaction 4-imidazolone-5-propanoate = trans-urocanate + H2O. It participates in amino-acid degradation; L-histidine degradation into L-glutamate; N-formimidoyl-L-glutamate from L-histidine: step 2/3. Functionally, catalyzes the conversion of urocanate to 4-imidazolone-5-propionate. This chain is Urocanate hydratase, found in Bacillus velezensis (strain DSM 23117 / BGSC 10A6 / LMG 26770 / FZB42) (Bacillus amyloliquefaciens subsp. plantarum).